The chain runs to 264 residues: Probable amino-acid-binding protein YxeM (264 aa).

The signal sequence occupies residues 1–20; sequence MKMKKWTVLVVAALLAVLSA. C21 is lipidated: N-palmitoyl cysteine. C21 carries the S-diacylglycerol cysteine lipid modification.

This sequence belongs to the bacterial solute-binding protein 3 family. The complex is composed of two ATP-binding proteins (YxeO), two transmembrane proteins (YxeN) and a solute-binding protein (YxeM).

The protein localises to the cell membrane. It is found in the membrane raft. In terms of biological role, probably part of the ABC transporter complex YxeMNO that could be involved in amino-acid import. May transport S-methylcysteine. This is Probable amino-acid-binding protein YxeM (yxeM) from Bacillus subtilis (strain 168).